A 245-amino-acid polypeptide reads, in one-letter code: 1-(5-phosphoribosyl)-5-[(5-phosphoribosylamino)methylideneamino] imidazole-4-carboxamide isomerase (245 aa).

The active-site Proton acceptor is the D7. Catalysis depends on D129, which acts as the Proton donor.

The protein belongs to the HisA/HisF family.

It is found in the cytoplasm. It catalyses the reaction 1-(5-phospho-beta-D-ribosyl)-5-[(5-phospho-beta-D-ribosylamino)methylideneamino]imidazole-4-carboxamide = 5-[(5-phospho-1-deoxy-D-ribulos-1-ylimino)methylamino]-1-(5-phospho-beta-D-ribosyl)imidazole-4-carboxamide. It functions in the pathway amino-acid biosynthesis; L-histidine biosynthesis; L-histidine from 5-phospho-alpha-D-ribose 1-diphosphate: step 4/9. The chain is 1-(5-phosphoribosyl)-5-[(5-phosphoribosylamino)methylideneamino] imidazole-4-carboxamide isomerase from Pectobacterium atrosepticum (strain SCRI 1043 / ATCC BAA-672) (Erwinia carotovora subsp. atroseptica).